We begin with the raw amino-acid sequence, 146 residues long: Large ribosomal subunit protein uL15 (146 aa).

The tract at residues 1 to 54 is disordered; that stretch reads MKLHELQPAAGSRKAPKRVGRGTGSGLGRNAGKGEKGQNARSGGGVRPGFEGGQ. 2 stretches are compositionally biased toward gly residues: residues 21-31 and 42-52; these read RGTGSGLGRNA and SGGGVRPGFEG.

Belongs to the universal ribosomal protein uL15 family. In terms of assembly, part of the 50S ribosomal subunit.

In terms of biological role, binds to the 23S rRNA. The protein is Large ribosomal subunit protein uL15 of Clostridium botulinum (strain Eklund 17B / Type B).